The primary structure comprises 172 residues: NADH-quinone oxidoreductase subunit B (172 aa).

4 residues coordinate [4Fe-4S] cluster: Cys46, Cys47, Cys111, and Cys141.

It belongs to the complex I 20 kDa subunit family. In terms of assembly, NDH-1 is composed of 14 different subunits. Subunits NuoB, C, D, E, F, and G constitute the peripheral sector of the complex. The cofactor is [4Fe-4S] cluster.

The protein localises to the cell membrane. It carries out the reaction a quinone + NADH + 5 H(+)(in) = a quinol + NAD(+) + 4 H(+)(out). In terms of biological role, NDH-1 shuttles electrons from NADH, via FMN and iron-sulfur (Fe-S) centers, to quinones in the respiratory chain. The immediate electron acceptor for the enzyme in this species is believed to be a menaquinone. Couples the redox reaction to proton translocation (for every two electrons transferred, four hydrogen ions are translocated across the cytoplasmic membrane), and thus conserves the redox energy in a proton gradient. In Bacillus cytotoxicus (strain DSM 22905 / CIP 110041 / 391-98 / NVH 391-98), this protein is NADH-quinone oxidoreductase subunit B.